The primary structure comprises 327 residues: Cytochrome P450 2C42 (327 aa).

Residue Cys-272 participates in heme binding.

It belongs to the cytochrome P450 family. It depends on heme as a cofactor.

It localises to the endoplasmic reticulum membrane. The protein localises to the microsome membrane. It carries out the reaction an organic molecule + reduced [NADPH--hemoprotein reductase] + O2 = an alcohol + oxidized [NADPH--hemoprotein reductase] + H2O + H(+). Functionally, cytochromes P450 are a group of heme-thiolate monooxygenases. In liver microsomes, this enzyme is involved in an NADPH-dependent electron transport pathway. It oxidizes a variety of structurally unrelated compounds, including steroids, fatty acids, and xenobiotics. The sequence is that of Cytochrome P450 2C42 (CYP2C42) from Sus scrofa (Pig).